The primary structure comprises 167 residues: MKTNCEFPLLCLLIVLVANVEGEVEDTGLKMVKRLWRNWEDPEQRQLLDQEAEQEKQLEKRLWRNWEDLELRQLLNEFAENQREKRLWRNWERRQVAKEDDGEKPKELWRNWEDLKRRQVVDLNDEQKTQRDKRLWRNWEDNHATLRKRSADSLSRQKRLGRERGKE.

A signal peptide spans 1–22 (MKTNCEFPLLCLLIVLVANVEG). The propeptide occupies 23 to 94 (EVEDTGLKMV…KRLWRNWERR (72 aa)). RLWRNWE repeat units follow at residues 34-40 (RLWRNWE), 61-67 (RLWRNWE), and 86-92 (RLWRNWE). At Gln95 the chain carries Pyrrolidone carboxylic acid. The stretch at 107–113 (ELWRNWE) is one RLWRNWE 4; approximate repeat. The propeptide occupies 112–118 (WEDLKRR). At Gln119 the chain carries Pyrrolidone carboxylic acid. The stretch at 134-140 (RLWRNWE) is one RLWRNWE 5 repeat. Residues 139–167 (WEDNHATLRKRSADSLSRQKRLGRERGKE) constitute a propeptide that is removed on maturation. The tract at residues 147–167 (RKRSADSLSRQKRLGRERGKE) is disordered.

It belongs to the scoloptoxin-08 family. Expressed by the venom gland.

Its subcellular location is the secreted. The sequence is that of U-scoloptoxin-Er5c from Ethmostigmus rubripes (Giant centipede).